Consider the following 368-residue polypeptide: uncharacterized protein (368 aa).

Belongs to the YCR102c/YLR460c/YNL134c family.

This is an uncharacterized protein from Saccharomyces cerevisiae (strain ATCC 204508 / S288c) (Baker's yeast).